Reading from the N-terminus, the 397-residue chain is Elongation factor Tu (397 aa).

Residues 10-207 (LPHVNVGTIG…TLDSYIPEPV (198 aa)) enclose the tr-type G domain. The segment at 19–26 (GHVDHGKT) is G1. 19–26 (GHVDHGKT) is a binding site for GTP. A Mg(2+)-binding site is contributed by threonine 26. The segment at 60–64 (GITIN) is G2. The segment at 81–84 (DCPG) is G3. GTP contacts are provided by residues 81–85 (DCPGH) and 136–139 (NKAD). The G4 stretch occupies residues 136 to 139 (NKAD). The interval 174–176 (SAR) is G5.

The protein belongs to the TRAFAC class translation factor GTPase superfamily. Classic translation factor GTPase family. EF-Tu/EF-1A subfamily. Monomer.

The protein resides in the cytoplasm. The catalysed reaction is GTP + H2O = GDP + phosphate + H(+). GTP hydrolase that promotes the GTP-dependent binding of aminoacyl-tRNA to the A-site of ribosomes during protein biosynthesis. The sequence is that of Elongation factor Tu from Pseudomonas putida (strain ATCC 700007 / DSM 6899 / JCM 31910 / BCRC 17059 / LMG 24140 / F1).